A 277-amino-acid chain; its full sequence is Large ribosomal subunit protein uL2 (277 aa).

Positions 219–277 (RPQTRGSAMNPVDHPHGGGEGKKNSGRHPVTPWGKPTKGAKTRRKKASDKLIISRRKGK) are disordered. Residues 231-241 (DHPHGGGEGKK) show a composition bias toward basic and acidic residues. Residues 256–277 (KGAKTRRKKASDKLIISRRKGK) are compositionally biased toward basic residues.

This sequence belongs to the universal ribosomal protein uL2 family. As to quaternary structure, part of the 50S ribosomal subunit. Forms a bridge to the 30S subunit in the 70S ribosome.

One of the primary rRNA binding proteins. Required for association of the 30S and 50S subunits to form the 70S ribosome, for tRNA binding and peptide bond formation. It has been suggested to have peptidyltransferase activity; this is somewhat controversial. Makes several contacts with the 16S rRNA in the 70S ribosome. This is Large ribosomal subunit protein uL2 from Campylobacter curvus (strain 525.92).